The chain runs to 584 residues: Proline--tRNA ligase (584 aa).

Belongs to the class-II aminoacyl-tRNA synthetase family. ProS type 1 subfamily. In terms of assembly, homodimer.

The protein resides in the cytoplasm. The enzyme catalyses tRNA(Pro) + L-proline + ATP = L-prolyl-tRNA(Pro) + AMP + diphosphate. Functionally, catalyzes the attachment of proline to tRNA(Pro) in a two-step reaction: proline is first activated by ATP to form Pro-AMP and then transferred to the acceptor end of tRNA(Pro). As ProRS can inadvertently accommodate and process non-cognate amino acids such as alanine and cysteine, to avoid such errors it has two additional distinct editing activities against alanine. One activity is designated as 'pretransfer' editing and involves the tRNA(Pro)-independent hydrolysis of activated Ala-AMP. The other activity is designated 'posttransfer' editing and involves deacylation of mischarged Ala-tRNA(Pro). The misacylated Cys-tRNA(Pro) is not edited by ProRS. In Mycobacterium sp. (strain KMS), this protein is Proline--tRNA ligase.